The primary structure comprises 306 residues: MISEDLKLSLYAEGCDIKQNEFLKYYTSFRIGGPVPYILFPKTLNAFVNALSQLVKRDIPFRIIGQGTNLIISDEPLKFVVLSTKYLNKMNFEEKNNMDLIVEAQSGVSLSALSFLLSEDGYSGLEFACGIPGSVGGGVYMNAGAYGGEMKDVVLETTVYDLRDGKVKTLNKGDLEFGYRTSILQEGSFILLSTKFLLKKDELKRIKSKLIDFSTRRWEKQPIDLPSAGSIFKRPKPDFFVGTTIENLGLKGFSIGEAQISTKHAGFIINKGNATFKDVISLIEYVKRIVKDKYNVDLQVEPEIWK.

The 187-residue stretch at 30 to 216 (RIGGPVPYIL…KSKLIDFSTR (187 aa)) folds into the FAD-binding PCMH-type domain. The active site involves Arg-180. Catalysis depends on Ser-230, which acts as the Proton donor. Residue Glu-301 is part of the active site.

This sequence belongs to the MurB family. The cofactor is FAD.

Its subcellular location is the cytoplasm. The enzyme catalyses UDP-N-acetyl-alpha-D-muramate + NADP(+) = UDP-N-acetyl-3-O-(1-carboxyvinyl)-alpha-D-glucosamine + NADPH + H(+). The protein operates within cell wall biogenesis; peptidoglycan biosynthesis. Cell wall formation. The protein is UDP-N-acetylenolpyruvoylglucosamine reductase of Petrotoga mobilis (strain DSM 10674 / SJ95).